The following is a 201-amino-acid chain: Holliday junction branch migration complex subunit RuvA (201 aa).

The domain I stretch occupies residues Met1–Ala64. The interval Gln65–Glu143 is domain II. A flexible linker region spans residues His144–Ser154. The interval Ser154–Leu201 is domain III.

It belongs to the RuvA family. Homotetramer. Forms an RuvA(8)-RuvB(12)-Holliday junction (HJ) complex. HJ DNA is sandwiched between 2 RuvA tetramers; dsDNA enters through RuvA and exits via RuvB. An RuvB hexamer assembles on each DNA strand where it exits the tetramer. Each RuvB hexamer is contacted by two RuvA subunits (via domain III) on 2 adjacent RuvB subunits; this complex drives branch migration. In the full resolvosome a probable DNA-RuvA(4)-RuvB(12)-RuvC(2) complex forms which resolves the HJ.

Its subcellular location is the cytoplasm. The RuvA-RuvB-RuvC complex processes Holliday junction (HJ) DNA during genetic recombination and DNA repair, while the RuvA-RuvB complex plays an important role in the rescue of blocked DNA replication forks via replication fork reversal (RFR). RuvA specifically binds to HJ cruciform DNA, conferring on it an open structure. The RuvB hexamer acts as an ATP-dependent pump, pulling dsDNA into and through the RuvAB complex. HJ branch migration allows RuvC to scan DNA until it finds its consensus sequence, where it cleaves and resolves the cruciform DNA. The protein is Holliday junction branch migration complex subunit RuvA of Actinobacillus pleuropneumoniae serotype 7 (strain AP76).